Consider the following 253-residue polypeptide: 3-dehydroquinate dehydratase (253 aa).

3-dehydroquinate-binding positions include 46–48 (EWR) and Arg82. The active-site Proton donor/acceptor is the His143. Lys170 serves as the catalytic Schiff-base intermediate with substrate. Arg213, Ser232, and Gln236 together coordinate 3-dehydroquinate.

Belongs to the type-I 3-dehydroquinase family. In terms of assembly, homodimer.

It catalyses the reaction 3-dehydroquinate = 3-dehydroshikimate + H2O. The protein operates within metabolic intermediate biosynthesis; chorismate biosynthesis; chorismate from D-erythrose 4-phosphate and phosphoenolpyruvate: step 3/7. In terms of biological role, involved in the third step of the chorismate pathway, which leads to the biosynthesis of aromatic amino acids. Catalyzes the cis-dehydration of 3-dehydroquinate (DHQ) and introduces the first double bond of the aromatic ring to yield 3-dehydroshikimate. In Bacillus velezensis (strain DSM 23117 / BGSC 10A6 / LMG 26770 / FZB42) (Bacillus amyloliquefaciens subsp. plantarum), this protein is 3-dehydroquinate dehydratase.